Reading from the N-terminus, the 232-residue chain is tRNA (guanine-N(7)-)-methyltransferase (232 aa).

Positions 63, 88, 115, and 137 each coordinate S-adenosyl-L-methionine. D137 is an active-site residue. Residues K141, D173, and T211–E214 contribute to the substrate site.

Belongs to the class I-like SAM-binding methyltransferase superfamily. TrmB family.

The catalysed reaction is guanosine(46) in tRNA + S-adenosyl-L-methionine = N(7)-methylguanosine(46) in tRNA + S-adenosyl-L-homocysteine. It functions in the pathway tRNA modification; N(7)-methylguanine-tRNA biosynthesis. In terms of biological role, catalyzes the formation of N(7)-methylguanine at position 46 (m7G46) in tRNA. The sequence is that of tRNA (guanine-N(7)-)-methyltransferase from Rhizobium meliloti (strain 1021) (Ensifer meliloti).